A 130-amino-acid polypeptide reads, in one-letter code: Small ribosomal subunit protein uS9 (130 aa).

It belongs to the universal ribosomal protein uS9 family.

This chain is Small ribosomal subunit protein uS9, found in Salmonella paratyphi A (strain AKU_12601).